The following is a 685-amino-acid chain: Phenoloxidase subunit 1 (685 aa).

Cu cation contacts are provided by H209, H213, and H239. E351 (proton acceptor) is an active-site residue. 3 residues coordinate Cu cation: H366, H370, and H406. 2 disulfide bridges follow: C580/C622 and C582/C629.

Heterodimer. Forms a complex with an interleukin 1-like protein as a consequence of a host defense response. The cofactor is Cu(2+). The N-terminus is blocked. Synthesized by oenocytoids, a type of hemocyte, and released into the hemolymph plasma.

Its subcellular location is the secreted. The catalysed reaction is 2 L-dopa + O2 = 2 L-dopaquinone + 2 H2O. It carries out the reaction L-tyrosine + O2 = L-dopaquinone + H2O. Its activity is regulated as follows. Activated by immulectin and lipopolysaccharide. This is a copper-containing oxidase that functions in the formation of pigments such as melanins and other polyphenolic compounds. Catalyzes the rate-limiting conversions of tyrosine to DOPA, DOPA to DOPA-quinone and possibly 5,6 dihydroxyindole to indole-5'6 quinone. Binds to the surface of hemocytes and is involved in hemocyte melanization. The sequence is that of Phenoloxidase subunit 1 from Manduca sexta (Tobacco hawkmoth).